We begin with the raw amino-acid sequence, 372 residues long: N-methyl-L-tryptophan oxidase (372 aa).

An FAD-binding site is contributed by 4–34 (DLIIIGSGSVGAAAGYYATRAGLNVLMTDAH). Position 308 is an S-8alpha-FAD cysteine (C308).

It belongs to the MSOX/MTOX family. MTOX subfamily. Monomer. Requires FAD as cofactor.

It carries out the reaction N(alpha)-methyl-L-tryptophan + O2 + H2O = L-tryptophan + formaldehyde + H2O2. Functionally, catalyzes the oxidative demethylation of N-methyl-L-tryptophan. This chain is N-methyl-L-tryptophan oxidase, found in Escherichia coli O127:H6 (strain E2348/69 / EPEC).